The sequence spans 479 residues: MSPQTETKASVGFKAGVKEYKLTYYTPEYETKDTDILAAFRVTPQPGVPPEEAGAAVAAESSTGTWTTVWTDGLTSLDRYKGRCYHIEPVPGETDQYICYVAYPLDLFEEGSVTNMFTSIVGNVFGFKALRALRLEDLRIPPAYIKTFQGPPHGIQVERDKLNKYGRPLLGCTIKPKLGLSAKNYGRAVYECLRGGLDFTKDDENVNSQPFMRWRDRFLFCAEAIYKSQAETGEIKGHYLNATAGTSEEMIKRAVFARELGVPIVMHDYLTGGFTANTSLAHYCRDNGLLLHIHRAMHAVIDRQKNHGIHFRVLAKALRMSGGDHIHSGTVVGKLEGERDITLGFVDLLRDDFIEKDRSRGIYFTQDWVSLPGVLPVASGGIHVWHMPALTEIFGDDSVLQFGGGTLGHPWGNAPGAVANRVALEACVKARNEGRDLASEGNVIIREAAKWSPELSAACEVWKEIRFDFKAVDTLDPEK.

The propeptide occupies 1 to 2 (MS). Residue P3 is modified to N-acetylproline. An N6,N6,N6-trimethyllysine modification is found at K14. Substrate is bound by residues N123 and T173. The active-site Proton acceptor is K175. K177 serves as a coordination point for substrate. Mg(2+) contacts are provided by K201, D203, and E204. K201 bears the N6-carboxylysine mark. The Proton acceptor role is filled by H294. Residues R295, H327, and S379 each coordinate substrate.

It belongs to the RuBisCO large chain family. Type I subfamily. Heterohexadecamer of 8 large chains and 8 small chains. Requires Mg(2+) as cofactor.

The protein localises to the plastid. The protein resides in the chloroplast. The catalysed reaction is 2 (2R)-3-phosphoglycerate + 2 H(+) = D-ribulose 1,5-bisphosphate + CO2 + H2O. The enzyme catalyses D-ribulose 1,5-bisphosphate + O2 = 2-phosphoglycolate + (2R)-3-phosphoglycerate + 2 H(+). RuBisCO catalyzes two reactions: the carboxylation of D-ribulose 1,5-bisphosphate, the primary event in carbon dioxide fixation, as well as the oxidative fragmentation of the pentose substrate in the photorespiration process. Both reactions occur simultaneously and in competition at the same active site. The polypeptide is Ribulose bisphosphate carboxylase large chain (Jasminum nudiflorum (Winter jasmine)).